An 802-amino-acid chain; its full sequence is Lon protease (802 aa).

In terms of domain architecture, Lon N-terminal spans 17 to 211; it reads SIVMPLFEVV…LFLHILTKHK (195 aa). An ATP-binding site is contributed by 363–370; sequence GPPGTGKT. The region spanning 600–780 is the Lon proteolytic domain; sequence ENVPGVVTGL…EEVLREALDI (181 aa). Residues S686 and K729 contribute to the active site.

This sequence belongs to the peptidase S16 family. As to quaternary structure, homohexamer. Organized in a ring with a central cavity.

It localises to the cytoplasm. It catalyses the reaction Hydrolysis of proteins in presence of ATP.. ATP-dependent serine protease that mediates the selective degradation of mutant and abnormal proteins as well as certain short-lived regulatory proteins. Required for cellular homeostasis and for survival from DNA damage and developmental changes induced by stress. Degrades polypeptides processively to yield small peptide fragments that are 5 to 10 amino acids long. Binds to DNA in a double-stranded, site-specific manner. In Methanosarcina barkeri (strain Fusaro / DSM 804), this protein is Lon protease.